The following is a 1100-amino-acid chain: Conjugal transfer protein TraA (1100 aa).

404–411 (GRAGAGKT) lines the ATP pocket.

This sequence belongs to the MobA/MobL family.

This is Conjugal transfer protein TraA (traA) from Agrobacterium fabrum (strain C58 / ATCC 33970) (Agrobacterium tumefaciens (strain C58)).